A 186-amino-acid polypeptide reads, in one-letter code: MSTEFEQAVAALHGEGVIAYATEAVFGLGCDPDSELAVQRLLAIKQRPVEKGLILIAADLVQLQDYIDLSQLSGEQLARVEASWPGPFTWIMPARATTPTWLTGQFDTLAVRVTAHPQVQALCRAFGKPLVSTSANLTGEEPARRVTDIGELLASKLAYILPGEVGGQANPSEIKDARTGAVIRPS.

One can recognise a YrdC-like domain in the interval S2–S186.

The protein belongs to the SUA5 family. TsaC subfamily.

It localises to the cytoplasm. It catalyses the reaction L-threonine + hydrogencarbonate + ATP = L-threonylcarbamoyladenylate + diphosphate + H2O. Functionally, required for the formation of a threonylcarbamoyl group on adenosine at position 37 (t(6)A37) in tRNAs that read codons beginning with adenine. Catalyzes the conversion of L-threonine, HCO(3)(-)/CO(2) and ATP to give threonylcarbamoyl-AMP (TC-AMP) as the acyladenylate intermediate, with the release of diphosphate. The polypeptide is Threonylcarbamoyl-AMP synthase (Aeromonas salmonicida (strain A449)).